Consider the following 529-residue polypeptide: DnaJ homolog l(2)tid, mitochondrial (529 aa).

The N-terminal 22 residues, 1-22, are a transit peptide targeting the mitochondrion; sequence MISCKNLCVLRQLPLKNCRRHY. At Arg-35 the chain carries Omega-N-methylarginine. The J domain maps to 80-145; sequence DYYATLGVAK…QKRREYDTYG (66 aa). Lys-121 carries the post-translational modification N6-acetyllysine. The segment at 230–308 adopts a CR-type zinc-finger fold; that stretch reads GVNKDVNVNV…CEGKGQTVQR (79 aa). Zn(2+) is bound by residues Cys-243, Cys-246, Cys-260, Cys-263, Cys-282, Cys-285, Cys-296, and Cys-299. One copy of the CXXCXGXG motif; approximate repeat lies at 243-250; sequence CPKCAGSK. The stretch at 260-267 is one CXXCXGXG motif repeat; sequence CQYCNGTG. The stretch at 282 to 289 is one CXXCXGXG motif; approximate repeat; the sequence is CRYCQGTR. A CXXCXGXG motif repeat occupies 296-303; that stretch reads CAECEGKG. The segment at 441–529 is disordered; the sequence is TPGQIHGMAQ…FLNKIKSMFN (89 aa). Basic and acidic residues predominate over residues 497–508; the sequence is QSEKSETRRKDQ.

It is found in the mitochondrion outer membrane. In terms of biological role, may act as a tumor suppressor in larval imaginal disks. The sequence is that of DnaJ homolog l(2)tid, mitochondrial (l(2)tid) from Drosophila virilis (Fruit fly).